We begin with the raw amino-acid sequence, 336 residues long: Glycerol-3-phosphate dehydrogenase [NAD(P)+] (336 aa).

Residues serine 11, tryptophan 12, arginine 33, arginine 34, and lysine 107 each contribute to the NADPH site. Positions 107 and 137 each coordinate sn-glycerol 3-phosphate. Alanine 141 provides a ligand contact to NADPH. Positions 192, 245, 255, 256, and 257 each coordinate sn-glycerol 3-phosphate. Residue lysine 192 is the Proton acceptor of the active site. An NADPH-binding site is contributed by arginine 256. Glutamate 282 contributes to the NADPH binding site.

Belongs to the NAD-dependent glycerol-3-phosphate dehydrogenase family.

It is found in the cytoplasm. The enzyme catalyses sn-glycerol 3-phosphate + NAD(+) = dihydroxyacetone phosphate + NADH + H(+). It catalyses the reaction sn-glycerol 3-phosphate + NADP(+) = dihydroxyacetone phosphate + NADPH + H(+). The protein operates within membrane lipid metabolism; glycerophospholipid metabolism. Functionally, catalyzes the reduction of the glycolytic intermediate dihydroxyacetone phosphate (DHAP) to sn-glycerol 3-phosphate (G3P), the key precursor for phospholipid synthesis. This is Glycerol-3-phosphate dehydrogenase [NAD(P)+] from Thermobifida fusca (strain YX).